Consider the following 385-residue polypeptide: SWI/SNF-related matrix-associated actin-dependent regulator of chromatin subfamily B member 1 (385 aa).

A DNA-binding region spans residues 1-113; the sequence is MMMMALSKTF…DEKYKAVSIS (113 aa). Residues K106, K108, and K124 each participate in a glycyl lysine isopeptide (Lys-Gly) (interchain with G-Cter in SUMO2) cross-link. S129 bears the Phosphoserine mark. Residue K161 forms a Glycyl lysine isopeptide (Lys-Gly) (interchain with G-Cter in SUMO2) linkage. The interval 183–243 is HIV-1 integrase-binding; it reads PEVLVPIRLD…VPAIASAIRQ (61 aa). A run of 2 repeats spans residues 186–245 and 259–319. Positions 186–245 are MYC-binding; the sequence is LVPIRLDMEIDGQKLRDAFTWNMNEKLMTPEMFSEILCDDLDLNPLTFVPAIASAIRQQI. The interval 186–319 is 2 X approximate tandem repeats; it reads LVPIRLDMEI…TIAYSIRGQL (134 aa). Residues 304–318 are interaction with PPP1R15A; sequence GGEFVTTIAYSIRGQ.

This sequence belongs to the SNF5 family. In terms of assembly, component of the multiprotein chromatin-remodeling complexes SWI/SNF: SWI/SNF-A (BAF), SWI/SNF-B (PBAF) and related complexes. The canonical complex contains a catalytic subunit (either SMARCA4/BRG1/BAF190A or SMARCA2/BRM/BAF190B) and at least SMARCE1, ACTL6A/BAF53, SMARCC1/BAF155, SMARCC2/BAF170, and SMARCB1/SNF5/BAF47. Other subunits specific to each of the complexes may also be present permitting several possible combinations developmentally and tissue specific. Component of the BAF complex, which includes at least actin (ACTB), ARID1A/BAF250A, ARID1B/BAF250B, SMARCA2/BRM, SMARCA4/BRG1/BAF190A, ACTL6A/BAF53, ACTL6B/BAF53B, SMARCE1/BAF57 SMARCC1/BAF155, SMARCC2/BAF170, SMARCB1/SNF5/INI1, and one or more SMARCD1/BAF60A, SMARCD2/BAF60B, or SMARCD3/BAF60C. In muscle cells, the BAF complex also contains DPF3. Component of neural progenitors-specific chromatin remodeling complex (npBAF complex) composed of at least, ARID1A/BAF250A or ARID1B/BAF250B, SMARCD1/BAF60A, SMARCD3/BAF60C, SMARCA2/BRM/BAF190B, SMARCA4/BRG1/BAF190A, SMARCB1/BAF47, SMARCC1/BAF155, SMARCE1/BAF57, SMARCC2/BAF170, PHF10/BAF45A, ACTL6A/BAF53A and actin. Component of neuron-specific chromatin remodeling complex (nBAF complex) composed of at least, ARID1A/BAF250A or ARID1B/BAF250B, SMARCD1/BAF60A, SMARCD3/BAF60C, SMARCA2/BRM/BAF190B, SMARCA4/BRG1/BAF190A, SMARCB1/BAF47, SMARCC1/BAF155, SMARCE1/BAF57, SMARCC2/BAF170, DPF1/BAF45B, DPF3/BAF45C, ACTL6B/BAF53B and actin. Component of the SWI/SNF-B (PBAF) chromatin remodeling complex, at least composed of SMARCA4/BRG1, SMARCB1/BAF47/SNF5, ACTL6A/BAF53A or ACTL6B/BAF53B, SMARCE1/BAF57, SMARCD1/BAF60A, SMARCD2/BAF60B, perhaps SMARCD3/BAF60C, SMARCC1/BAF155, SMARCC2/BAF170, PBRM1/BAF180, ARID2/BAF200 and actin. Binds to double-stranded DNA. Interacts with CEBPB (when not methylated). Interacts with PIH1D1. Interacts with MYK and MAEL. Interacts with PPP1R15A. Interacts with DPF2. Interacts with YWHAZ. Interacts with ERCC6. Interacts with FOS, FOSB isoform 1 and 2, FOSL1 and FOSL2. As to quaternary structure, (Microbial infection) Binds tightly to the human immunodeficiency virus-type 1 (HIV-1) integrase in vitro and stimulates its DNA-joining activity. Interacts with human papillomavirus 18 E1 protein to stimulate its viral replication. Interacts with Epstein-Barr virus protein EBNA-2.

The protein resides in the nucleus. In terms of biological role, core component of the BAF (hSWI/SNF) complex. This ATP-dependent chromatin-remodeling complex plays important roles in cell proliferation and differentiation, in cellular antiviral activities and inhibition of tumor formation. The BAF complex is able to create a stable, altered form of chromatin that constrains fewer negative supercoils than normal. This change in supercoiling would be due to the conversion of up to one-half of the nucleosomes on polynucleosomal arrays into asymmetric structures, termed altosomes, each composed of 2 histones octamers. Stimulates in vitro the remodeling activity of SMARCA4/BRG1/BAF190A. Involved in activation of CSF1 promoter. Belongs to the neural progenitors-specific chromatin remodeling complex (npBAF complex) and the neuron-specific chromatin remodeling complex (nBAF complex). During neural development a switch from a stem/progenitor to a postmitotic chromatin remodeling mechanism occurs as neurons exit the cell cycle and become committed to their adult state. The transition from proliferating neural stem/progenitor cells to postmitotic neurons requires a switch in subunit composition of the npBAF and nBAF complexes. As neural progenitors exit mitosis and differentiate into neurons, npBAF complexes which contain ACTL6A/BAF53A and PHF10/BAF45A, are exchanged for homologous alternative ACTL6B/BAF53B and DPF1/BAF45B or DPF3/BAF45C subunits in neuron-specific complexes (nBAF). The npBAF complex is essential for the self-renewal/proliferative capacity of the multipotent neural stem cells. The nBAF complex along with CREST plays a role regulating the activity of genes essential for dendrite growth. Plays a key role in cell-cycle control and causes cell cycle arrest in G0/G1. This Homo sapiens (Human) protein is SWI/SNF-related matrix-associated actin-dependent regulator of chromatin subfamily B member 1 (SMARCB1).